The chain runs to 307 residues: MSMILSASVVRVRDGLPLSASTDCEQSAGVQECRKYFKMLSRKLAQFPDRCTLKTGRHNINFISSLGVSYMMLCTENYPNVLAFSFLDELQKEFITTYNMMKTNTAVRPYCFIEFDNFIQRTKQRYNNPRSLSTKINLSDMQMEIKLRPPYQIPMCELGSANGVTSAFSVDCKGAGKISSAHQRLEPATLSGIVAFILSLLCGALNLIRGFHAIESLLQSDGEDFSYMIAFFLGTAACLYQCYLLVYYTSWRNVKSFLTFGLICLCNMYLYELRNLWQLFFHVTVGAFVTLQIWLRQAQGKAPDHDV.

The residue at position 2 (S2) is an N-acetylserine. The Cytoplasmic portion of the chain corresponds to 2–187 (SMILSASVVR…ISSAHQRLEP (186 aa)). 2 positions are modified to phosphoserine: S6 and S8. The Longin domain occupies 8 to 119 (SVVRVRDGLP…YCFIEFDNFI (112 aa)). Residues 188–208 (ATLSGIVAFILSLLCGALNLI) traverse the membrane as a helical segment. Residues 209–226 (RGFHAIESLLQSDGEDFS) are Lumenal-facing. A helical membrane pass occupies residues 227–247 (YMIAFFLGTAACLYQCYLLVY). Residues 248 to 253 (YTSWRN) are Cytoplasmic-facing. The chain crosses the membrane as a helical span at residues 254–271 (VKSFLTFGLICLCNMYLY). Over 272 to 274 (ELR) the chain is Lumenal. The helical transmembrane segment at 275–295 (NLWQLFFHVTVGAFVTLQIWL) threads the bilayer. Residues 296–307 (RQAQGKAPDHDV) lie on the Cytoplasmic side of the membrane.

It belongs to the synaptobrevin family.

The protein resides in the endoplasmic reticulum membrane. In terms of biological role, may be involved in vesicle transport between the ER and the Golgi complex. This Rattus norvegicus (Rat) protein is Vesicle-trafficking protein SEC22a (Sec22a).